The primary structure comprises 281 residues: Small ribosomal subunit protein uS2 (281 aa).

The protein belongs to the universal ribosomal protein uS2 family.

This is Small ribosomal subunit protein uS2 (rpsB) from Chlamydia muridarum (strain MoPn / Nigg).